Consider the following 560-residue polypeptide: Dihydroxy-acid dehydratase (560 aa).

Cys-50 is a binding site for [2Fe-2S] cluster. Position 82 (Asp-82) interacts with Mg(2+). Cys-123 is a [2Fe-2S] cluster binding site. The Mg(2+) site is built by Asp-124 and Lys-125. At Lys-125 the chain carries N6-carboxylysine. [2Fe-2S] cluster is bound at residue Cys-195. Residue Glu-447 participates in Mg(2+) binding. The active-site Proton acceptor is Ser-473.

This sequence belongs to the IlvD/Edd family. As to quaternary structure, homodimer. [2Fe-2S] cluster is required as a cofactor. It depends on Mg(2+) as a cofactor.

The catalysed reaction is (2R)-2,3-dihydroxy-3-methylbutanoate = 3-methyl-2-oxobutanoate + H2O. It catalyses the reaction (2R,3R)-2,3-dihydroxy-3-methylpentanoate = (S)-3-methyl-2-oxopentanoate + H2O. It functions in the pathway amino-acid biosynthesis; L-isoleucine biosynthesis; L-isoleucine from 2-oxobutanoate: step 3/4. The protein operates within amino-acid biosynthesis; L-valine biosynthesis; L-valine from pyruvate: step 3/4. Its function is as follows. Functions in the biosynthesis of branched-chain amino acids. Catalyzes the dehydration of (2R,3R)-2,3-dihydroxy-3-methylpentanoate (2,3-dihydroxy-3-methylvalerate) into 2-oxo-3-methylpentanoate (2-oxo-3-methylvalerate) and of (2R)-2,3-dihydroxy-3-methylbutanoate (2,3-dihydroxyisovalerate) into 2-oxo-3-methylbutanoate (2-oxoisovalerate), the penultimate precursor to L-isoleucine and L-valine, respectively. The polypeptide is Dihydroxy-acid dehydratase (Methylibium petroleiphilum (strain ATCC BAA-1232 / LMG 22953 / PM1)).